The chain runs to 285 residues: MMSDYNWFEGIPFPAISYQREILEDIRNKFVVKEEDLLILTYPKSGTNWLNEIVCLIQTKGDPKWIQTVPIWDRSPWIETEIGYSAIINKEGPRLITSHLPIHLFSKSFFSSKAKAIYLMRNPRDILVSGYFFWGNTNLVKNPGSLGTYFEWFLQGNVLFGSWFEHVRGWLSMREWDNFLVLYYEDMKKDTKGTIKKICDFLGKNLGPDELDLVLKYSSFQAMKENNMSNYSLIKEDRVTNGLKLMRKGTTGDWKNHFTVAQAEAFDKVFQEKMAGFPPGMFPWE.

Positions 44, 45, 46, 47, 48, and 49 each coordinate 3'-phosphoadenylyl sulfate. His-99 acts as the Proton acceptor in catalysis. 3'-phosphoadenylyl sulfate contacts are provided by Arg-121, Ser-129, Tyr-184, Ser-218, Met-223, Arg-247, Lys-248, and Gly-249.

This sequence belongs to the sulfotransferase 1 family.

The protein resides in the cytoplasm. The enzyme catalyses an alcohol + 3'-phosphoadenylyl sulfate = an alkyl sulfate + adenosine 3',5'-bisphosphate + H(+). In terms of biological role, sulfotransferase that utilizes 3'-phospho-5'-adenylyl sulfate (PAPS) as sulfonate donor to catalyze the sulfate conjugation of a potential wide variety of acceptor molecules bearing a hydroxyl group. Sulfonation increases the water solubility of most compounds, and therefore their renal excretion, but it can also result in bioactivation to form active metabolites. The protein is Sulfotransferase 2A2 of Mus musculus (Mouse).